The sequence spans 66 residues: Large ribosomal subunit protein bL32 (66 aa).

The segment covering 1–19 (MAVPKRKMSRSNTRARRSQ) has biased composition (basic residues). The disordered stretch occupies residues 1-20 (MAVPKRKMSRSNTRARRSQW).

It belongs to the bacterial ribosomal protein bL32 family.

The protein is Large ribosomal subunit protein bL32 of Beutenbergia cavernae (strain ATCC BAA-8 / DSM 12333 / CCUG 43141 / JCM 11478 / NBRC 16432 / NCIMB 13614 / HKI 0122).